The chain runs to 417 residues: Tol-Pal system protein TolB (417 aa).

The N-terminal stretch at 1–16 (MRYLWLFLIGTIGLFA) is a signal peptide.

Belongs to the TolB family. As to quaternary structure, the Tol-Pal system is composed of five core proteins: the inner membrane proteins TolA, TolQ and TolR, the periplasmic protein TolB and the outer membrane protein Pal. They form a network linking the inner and outer membranes and the peptidoglycan layer.

The protein resides in the periplasm. Functionally, part of the Tol-Pal system, which plays a role in outer membrane invagination during cell division and is important for maintaining outer membrane integrity. This chain is Tol-Pal system protein TolB, found in Helicobacter pylori (strain HPAG1).